A 387-amino-acid polypeptide reads, in one-letter code: Histone deacetylase 2 (387 aa).

The histone deacetylase stretch occupies residues 73–382; it reads KVSIIYSSSY…IENLSRQGLI (310 aa). Catalysis depends on His-201, which acts as the Proton donor/acceptor. Residues Asp-238, His-240, and Asp-318 each contribute to the Zn(2+) site.

It belongs to the histone deacetylase family. HD type 3 subfamily. Requires Zn(2+) as cofactor.

It localises to the nucleus. It catalyses the reaction N(6)-acetyl-L-lysyl-[histone] + H2O = L-lysyl-[histone] + acetate. Functionally, responsible for the deacetylation of lysine residues on the N-terminal part of the core histones (H2A, H2B, H3 and H4). Histone deacetylation gives a tag for epigenetic repression and plays an important role in transcriptional regulation, cell cycle progression and developmental events. Histone deacetylases act via the formation of large multiprotein complexes. The chain is Histone deacetylase 2 (HDA2) from Arabidopsis thaliana (Mouse-ear cress).